Consider the following 200-residue polypeptide: 3-isopropylmalate dehydratase small subunit (200 aa).

The protein belongs to the LeuD family. LeuD type 1 subfamily. As to quaternary structure, heterodimer of LeuC and LeuD.

It carries out the reaction (2R,3S)-3-isopropylmalate = (2S)-2-isopropylmalate. The protein operates within amino-acid biosynthesis; L-leucine biosynthesis; L-leucine from 3-methyl-2-oxobutanoate: step 2/4. Functionally, catalyzes the isomerization between 2-isopropylmalate and 3-isopropylmalate, via the formation of 2-isopropylmaleate. The protein is 3-isopropylmalate dehydratase small subunit of Pectobacterium carotovorum subsp. carotovorum (strain PC1).